Reading from the N-terminus, the 377-residue chain is Leukocyte elastase inhibitor (377 aa).

Met1 bears the N-acetylmethionine mark.

The protein belongs to the serpin family. Ov-serpin subfamily.

Its subcellular location is the cytoplasm. Its function is as follows. Regulates the activity of the neutrophil proteases. The polypeptide is Leukocyte elastase inhibitor (serpinb1) (Xenopus laevis (African clawed frog)).